The chain runs to 637 residues: MALTVTKTSNWTIEDSEQLYRIQGWGEPYFGINAAGHVTVSPKGDRGGSLDLYELVQALQQRNISLPLLLRFSDILEDRIERLNACFARAIARYGYQGAYKGVFPIKCNQQRHIIEALVRFGQSHQFGLEAGSKPELLIALAMLNTPGALLICNGYKDRSYIETAILARRLGHTSIIVLEQPEEVAEVIAVSQALGIEPIVGVRAKLSTQGVGRWGTSAGDRAKFGLTVPEILTAVEQLRAAGMLNALQLLHFHIGSQISAISVIKDAIREAGQIYGELVRLGANMQYLDVGGGLGVDYDGSKTNFHASKNYSMQNYASDVVAGIKDACRQRGIPDPTLISESGRAIASHQSVLIFNVLGVSEVPKITPEPATAEEHLIIRNLYDTYQAIDENNYQEAYNDALQFKGEAISLFNFGYLSLPERARAESLFWACCAKILGIARQQEYVPDDLEDLEKIMASIYYINLSVFQSVPDSWAIDQLFPIMPIHRLDEEPTERGILADLTCDSDGKIDQFIDLRDVKSVLELHPFRPGEPYYLGLFLNGAYQEIMGNLHNLFGDTNAVHIRLTPKGYEIEHLVRGDTMQEVLGYVQYQGDALLEKIRCRTEAALAEEQITLAEAQHLLENYERSLRSYTYLSS.

Position 107 is an N6-(pyridoxal phosphate)lysine (Lys-107). Residue 289-299 (LDVGGGLGVDY) coordinates substrate.

The protein belongs to the Orn/Lys/Arg decarboxylase class-II family. SpeA subfamily. The cofactor is Mg(2+). It depends on pyridoxal 5'-phosphate as a cofactor.

It carries out the reaction L-arginine + H(+) = agmatine + CO2. In terms of biological role, catalyzes the biosynthesis of agmatine from arginine. In Thermosynechococcus vestitus (strain NIES-2133 / IAM M-273 / BP-1), this protein is Biosynthetic arginine decarboxylase.